A 404-amino-acid polypeptide reads, in one-letter code: Probable tRNA sulfurtransferase (404 aa).

In terms of domain architecture, THUMP spans 60–165 (QPVVEALKLV…DEAAYISYEE (106 aa)). Residues 183–184 (ML), 208–209 (HF), Arg265, Gly287, and Gln296 contribute to the ATP site.

This sequence belongs to the ThiI family.

It is found in the cytoplasm. The catalysed reaction is [ThiI sulfur-carrier protein]-S-sulfanyl-L-cysteine + a uridine in tRNA + 2 reduced [2Fe-2S]-[ferredoxin] + ATP + H(+) = [ThiI sulfur-carrier protein]-L-cysteine + a 4-thiouridine in tRNA + 2 oxidized [2Fe-2S]-[ferredoxin] + AMP + diphosphate. The enzyme catalyses [ThiS sulfur-carrier protein]-C-terminal Gly-Gly-AMP + S-sulfanyl-L-cysteinyl-[cysteine desulfurase] + AH2 = [ThiS sulfur-carrier protein]-C-terminal-Gly-aminoethanethioate + L-cysteinyl-[cysteine desulfurase] + A + AMP + 2 H(+). Its pathway is cofactor biosynthesis; thiamine diphosphate biosynthesis. In terms of biological role, catalyzes the ATP-dependent transfer of a sulfur to tRNA to produce 4-thiouridine in position 8 of tRNAs, which functions as a near-UV photosensor. Also catalyzes the transfer of sulfur to the sulfur carrier protein ThiS, forming ThiS-thiocarboxylate. This is a step in the synthesis of thiazole, in the thiamine biosynthesis pathway. The sulfur is donated as persulfide by IscS. In Streptococcus pyogenes serotype M5 (strain Manfredo), this protein is Probable tRNA sulfurtransferase.